A 424-amino-acid polypeptide reads, in one-letter code: MTGMKKGKNKKKNVKNDERYKELDSLISNDSEIGNNSRWGGAKRICKLIGNEMRNNIYVYLLSILYLCVSVMNKVFSKRTLNKIGNYSFVTSEVHNMICTIVFQLLYFIYRKTSNPASRNESQKNFGWQFFLISLLDASTVIITMIGLTRTTGNIQSFIMQLIIPVNMYFCFIFLGYRYHLFNYLGAFIILITIAAVETVLSYETQSDNSIIFNLIMIFALIPLSFSNMTREVVFKKHKINIIRLNAMVALFQFFTSLLVLPVYNISFLKEIYMPFSEMGTNINDGLRCLFYGQSTIVENCGVGMVKMCDQCEGAWKTFITYSFFNICDNLLVCYIIDKFSTMTYTIVSCIQGPAITIAYYFKFLAGDVVRQPRLLDFLTLFGYLLGTIIYRIGNIILEKKKMLKALNTDGSEAELTSIETSTA.

At 1–56 (MTGMKKGKNKKKNVKNDERYKELDSLISNDSEIGNNSRWGGAKRICKLIGNEMRNN) the chain is on the cytoplasmic side. A helical transmembrane segment spans residues 57-77 (IYVYLLSILYLCVSVMNKVFS). At 78 to 88 (KRTLNKIGNYS) the chain is on the vacuolar side. The N-linked (GlcNAc...) asparagine glycan is linked to Asn-86. A helical membrane pass occupies residues 89 to 109 (FVTSEVHNMICTIVFQLLYFI). Over 110–125 (YRKTSNPASRNESQKN) the chain is Cytoplasmic. Residues 126-146 (FGWQFFLISLLDASTVIITMI) traverse the membrane as a helical segment. Topologically, residues 147–156 (GLTRTTGNIQ) are vacuolar. A helical transmembrane segment spans residues 157 to 177 (SFIMQLIIPVNMYFCFIFLGY). The Cytoplasmic segment spans residues 178–180 (RYH). The helical transmembrane segment at 181-201 (LFNYLGAFIILITIAAVETVL) threads the bilayer. Residues 202 to 209 (SYETQSDN) are Vacuolar-facing. A helical membrane pass occupies residues 210 to 230 (SIIFNLIMIFALIPLSFSNMT). At 231-248 (REVVFKKHKINIIRLNAM) the chain is on the cytoplasmic side. The helical transmembrane segment at 249–269 (VALFQFFTSLLVLPVYNISFL) threads the bilayer. At 270–317 (KEIYMPFSEMGTNINDGLRCLFYGQSTIVENCGVGMVKMCDQCEGAWK) the chain is on the vacuolar side. Cystine bridges form between Cys-289-Cys-312 and Cys-301-Cys-309. Residues 318 to 338 (TFITYSFFNICDNLLVCYIID) form a helical membrane-spanning segment. At 339–346 (KFSTMTYT) the chain is on the cytoplasmic side. The helical transmembrane segment at 347-367 (IVSCIQGPAITIAYYFKFLAG) threads the bilayer. The Vacuolar segment spans residues 368-377 (DVVRQPRLLD). Residues 378–398 (FLTLFGYLLGTIIYRIGNIIL) form a helical membrane-spanning segment. Topologically, residues 399 to 424 (EKKKMLKALNTDGSEAELTSIETSTA) are cytoplasmic.

This sequence belongs to the CRT-like transporter family.

The protein resides in the vacuole membrane. Its function is as follows. Nutrient transporter. Involved in maintaining the osmotic homeostasis of the digestive vacuole. The protein is Putative chloroquine resistance transporter of Plasmodium chabaudi.